Consider the following 243-residue polypeptide: Derlin-1.1 (243 aa).

Over 1-20 (MSSPAEYYKSLPPISKAYGT) the chain is Cytoplasmic. Residues 21-41 (LCFFTTVLVQLQILHPLFLYL) form a helical membrane-spanning segment. The Lumenal portion of the chain corresponds to 42–55 (DYPLVFKKFEIWRL). The helical transmembrane segment at 56-76 (LTSFFFLAPFSMKFGIRLLMI) threads the bilayer. Residues 77–94 (ARYGVMLEKGAFDKRTAD) are Cytoplasmic-facing. A helical transmembrane segment spans residues 95-115 (FLWMMIFGAISLLVLSIIPLF). Residues 116–157 (NSFFLGIPMVSMLLYVWSRENPNAQINIYGLVQLRSFYLPWA) lie on the Lumenal side of the membrane. A helical membrane pass occupies residues 158–178 (MLLLDVIFGSSLMPGLLGIMV). The Cytoplasmic portion of the chain corresponds to 179–243 (GHLYYFFAVL…FRGRSYRLNQ (65 aa)). The segment at 219 to 243 (SPVRPPANGNSGSGVFRGRSYRLNQ) is disordered.

Belongs to the derlin family. Expressed in roots, stalks, leaves, immature ears, embryo and endosperm.

It is found in the endoplasmic reticulum membrane. Its function is as follows. May be involved in the degradation process of specific misfolded endoplasmic reticulum (ER) luminal proteins. The chain is Derlin-1.1 (DER1.1) from Zea mays (Maize).